Consider the following 81-residue polypeptide: RNA-binding protein Hfq (81 aa).

Positions 9-68 (DPYLNILRKERVPVSIFLVNGIKLQGQIESFDQFVILLKNTVSQMVYKHAISTVVPSRTI) constitute a Sm domain.

This sequence belongs to the Hfq family. As to quaternary structure, homohexamer.

RNA chaperone that binds small regulatory RNA (sRNAs) and mRNAs to facilitate mRNA translational regulation in response to envelope stress, environmental stress and changes in metabolite concentrations. Also binds with high specificity to tRNAs. This is RNA-binding protein Hfq from Marinomonas sp. (strain MWYL1).